The primary structure comprises 51 residues: Sperm protamine P1 (51 aa).

Belongs to the protamine P1 family. In terms of assembly, cross-linked by interchain disulfide bonds around the DNA-helix. In terms of tissue distribution, testis.

The protein resides in the nucleus. Its subcellular location is the chromosome. Functionally, protamines substitute for histones in the chromatin of sperm during the haploid phase of spermatogenesis. They compact sperm DNA into a highly condensed, stable and inactive complex. The chain is Sperm protamine P1 (PRM1) from Hylobates lar (Lar gibbon).